A 422-amino-acid polypeptide reads, in one-letter code: S-adenosylmethionine synthase (422 aa).

His16 provides a ligand contact to ATP. Asp18 provides a ligand contact to Mg(2+). Residue Glu44 participates in K(+) binding. 2 residues coordinate L-methionine: Glu57 and Gln100. The tract at residues 100–110 is flexible loop; the sequence is QSPDISQGVSA. ATP-binding positions include 175–177, 251–252, Asp260, 266–267, Ala283, and Lys287; these read DGK, KF, and RK. Asp260 is a binding site for L-methionine. Lys291 is a binding site for L-methionine.

The protein belongs to the AdoMet synthase family. Homotetramer; dimer of dimers. It depends on Mg(2+) as a cofactor. The cofactor is K(+).

It is found in the cytoplasm. It catalyses the reaction L-methionine + ATP + H2O = S-adenosyl-L-methionine + phosphate + diphosphate. It participates in amino-acid biosynthesis; S-adenosyl-L-methionine biosynthesis; S-adenosyl-L-methionine from L-methionine: step 1/1. In terms of biological role, catalyzes the formation of S-adenosylmethionine (AdoMet) from methionine and ATP. The overall synthetic reaction is composed of two sequential steps, AdoMet formation and the subsequent tripolyphosphate hydrolysis which occurs prior to release of AdoMet from the enzyme. The chain is S-adenosylmethionine synthase from Rippkaea orientalis (strain PCC 8801 / RF-1) (Cyanothece sp. (strain PCC 8801)).